The primary structure comprises 228 residues: MATAEMEKTTTFDEAEKVKLNANEADDEVEEGEIVEETDDTTSYLSKEIATKHPLEHSWTFWFDNPVAKSKQAAWGSSLRNVYTFSTVEDFWGAYNNIHHPSKLVVGADLHCFKHKIEPKWEDPVCANGGTWKMSFSKGKSDTSWLYTLLAMIGHQFDHEDEICGAVVSVRGKGEKISLWTKNAANETAQVSIGKQWKQFLDYSDSVGFIFHDDAKRLDRNAKNRYTV.

Residues 1–19 (MATAEMEKTTTFDEAEKVK) show a composition bias toward basic and acidic residues. Residues 1–33 (MATAEMEKTTTFDEAEKVKLNANEADDEVEEGE) are disordered. Residues 24-33 (EADDEVEEGE) show a composition bias toward acidic residues. EIF4G-binding regions lie at residues 53-56 (HPLE) and 63-99 (FDNP…NNIH). MRNA is bound by residues 71-76 (KQAAWG), Lys-103, and 121-122 (WE). An intrachain disulfide couples Cys-126 to Cys-164. The interval 147 to 156 (YTLLAMIGHQ) is EIF4G-binding. Residues 171 to 176 (RGKGEK) and 216 to 220 (KRLDR) contribute to the mRNA site.

This sequence belongs to the eukaryotic initiation factor 4E family. In terms of assembly, EIF4F is a multi-subunit complex, the composition of which varies with external and internal environmental conditions. It is composed of at least EIF4A, EIF4E and EIF4G. EIF4E is also known to interact with other partners. In higher plants two isoforms of EIF4F have been identified, named isoform EIF4F and isoform EIF(iso)4F. Isoform EIF4F has subunits p220 and p26, whereas isoform EIF(iso)4F has subunits p82 and p28. (Microbial infection) Interacts with potyvirus viral genome-linked protein (VPg); this interaction is possible in susceptible hosts but is impaired in resistant plants. Thus the VPg of tobacco etch virus (TEV) strain HAT interacts with susceptible alleles pvr2(+), pvr2(3) and pvr2(9) but not with the resistant allele pvr2(2), the VPg of TEV strain CAA10 interacts with susceptible alleles pvr2(+), pvr2(2), pvr2(3) and pvr2(9), the VPg of potato virus Y (PVY) strain LYE84 interacts with tomato eIF4E1 and eIF4E2 as well as with the Capsicum annuum eIF4E1 susceptible allele pvr2(+) but not with resistant alleles pvr2(1), pvr2(2), pvr2(3), pvr2(4), pvr2(5), pvr2(6), pvr2(7), pvr2(8) and pvr2(9) and the VPg of PVY strain SON41 interacts with C.annuum eIF4E1 susceptible alleles pvr2(+), pvr2(1), pvr2(2), pvr2(3) and pvr2(4) but not with resistant alleles pvr2(5), pvr2(6), pvr2(7), pvr2(8) and pvr2(9). In addition, the susceptible allele pvr1(+) interacts strongly with TEV strains HAT and NW VPg while resistance alleles (pvr1, pvr1(1), and pvr1(2)) fail to bind TEV VPg. Post-translationally, according to the redox status, the Cys-126-Cys-164 disulfide bridge may have a role in regulating protein function by affecting its ability to bind capped mRNA.

The protein resides in the nucleus. It is found in the cytoplasm. Its function is as follows. Component of the protein complex eIF4F, which is involved in the recognition of the mRNA cap, ATP-dependent unwinding of 5'-terminal secondary structure and recruitment of mRNA to the ribosome. Recognizes and binds the 7-methylguanosine-containing mRNA cap during an early step in the initiation of protein synthesis and facilitates ribosome binding by inducing the unwinding of the mRNAs secondary structures. Key component of recessive resistance to potyviruses. In terms of biological role, (Microbial infection) Susceptibility host factor required for viral infection (e.g. potato virus Y (PVY) and tobacco etch virus (TEV)) by recruiting viral RNAs to the host ribosomal complex via an interaction with viral genome-linked protein (VPg). The protein is Eukaryotic translation initiation factor 4E-1 of Capsicum annuum (Capsicum pepper).